The following is a 268-amino-acid chain: MNITYVPEIHRTDKQHTENLRHWRKILGIAPFVSIVFPAIMCLIFTKDRFEKSPFLKFIILLLPFSYSAVQYALLRTNWKSDNKPEGILQSILYHTLSLLLLAFAAISILSITAFTLDKWESSESIFFSIVLPSFFIPPTYLLSTSCRLVPGQIGFTDTGINVLIDIPILLCPLVSLVLIIALEETECCYYSAIISSVFILIRLLREKYSPSEKSTLPTAPWRVAILVLILTLAALIYAFMMWGSMDILNDHFGLLNKLKRVFPFTNA.

This sequence belongs to the UPF0328 family.

This is UPF0328 protein ECU09_2030 from Encephalitozoon cuniculi (strain GB-M1) (Microsporidian parasite).